We begin with the raw amino-acid sequence, 122 residues long: Pollen allergen Phl p 2 (122 aa).

An N-terminal signal peptide occupies residues 1–26 (MSMASSSSSSLLAMAVLAALFAGAWC). Residues 41 to 120 (KHLAVLVKYE…KYTIGATYAP (80 aa)) form the Expansin-like CBD domain.

Belongs to the expansin family. Expansin B subfamily. In terms of tissue distribution, pollen specific.

The protein localises to the secreted. In Phleum pratense (Common timothy), this protein is Pollen allergen Phl p 2 (PHLPII).